A 653-amino-acid chain; its full sequence is Chaperone protein HtpG (653 aa).

Positions 1-361 are a; substrate-binding; that stretch reads MSETNQVQNH…SNDLPLNVSR (361 aa). Residues 362 to 578 form a b region; sequence EILQDNKVTQ…DDDMSSQMAK (217 aa). Residues 579-653 are c; that stretch reads LMASVGQEVP…LNKLMLSLTK (75 aa).

This sequence belongs to the heat shock protein 90 family. Homodimer.

The protein resides in the cytoplasm. Its function is as follows. Molecular chaperone. Has ATPase activity. This Colwellia psychrerythraea (strain 34H / ATCC BAA-681) (Vibrio psychroerythus) protein is Chaperone protein HtpG.